A 395-amino-acid chain; its full sequence is MSSFGTLFKVTTYGESHCKSVGCIVEGCPPGMNLTESDVQVQLTRRRPGQSNLTTPRNEKDKVQIQSGTEFGVTLGTPIGMLVLNQDQKPHDYSDMDNYPRPSHADYTYLEKYGVKASSGGGRSSARETIGRVAAGAIAEKYLLEAYGVEIVAFVSSVGKIAIPLHETASSAILDPEDDTFESPITAEYLKFLNKITREEVDKTTVRCPHAATAAKMAERITRARDNHDSIGGTVTCVIRNVPTGLGEPCFDKLEAKLAHAMMSIPATKSFEIGSGREGCKVAGSKHNDLFYRNADTGKLGTLTNNSGGVQGGISNGENVYFTIGFKSPATIGVEQSTSRYDGSDGVLAAKGRHDPCVVPRAIPIVEAMAALVVMDAVMIQQSRIASRNLLPNAQ.

It belongs to the chorismate synthase family. In terms of assembly, homotetramer. FMNH2 serves as cofactor.

It carries out the reaction 5-O-(1-carboxyvinyl)-3-phosphoshikimate = chorismate + phosphate. It participates in metabolic intermediate biosynthesis; chorismate biosynthesis; chorismate from D-erythrose 4-phosphate and phosphoenolpyruvate: step 7/7. This is Chorismate synthase from Schizosaccharomyces pombe (strain 972 / ATCC 24843) (Fission yeast).